The chain runs to 336 residues: Holliday junction branch migration complex subunit RuvB (336 aa).

Positions 1 to 181 (MDRIVEIEKV…FGMDFRLQFY (181 aa)) are large ATPase domain (RuvB-L). ATP contacts are provided by residues Leu-20, Arg-21, Gly-62, Lys-65, Thr-66, Thr-67, 128-130 (EDF), Arg-171, Tyr-181, and Arg-218. Thr-66 provides a ligand contact to Mg(2+). The segment at 182-252 (TSSELSRIVQ…RAKEGLNALG (71 aa)) is small ATPAse domain (RuvB-S). The interval 255–336 (SLGFDEMDIR…KIDIEKGLFE (82 aa)) is head domain (RuvB-H). The DNA site is built by Arg-309 and Arg-314.

It belongs to the RuvB family. As to quaternary structure, homohexamer. Forms an RuvA(8)-RuvB(12)-Holliday junction (HJ) complex. HJ DNA is sandwiched between 2 RuvA tetramers; dsDNA enters through RuvA and exits via RuvB. An RuvB hexamer assembles on each DNA strand where it exits the tetramer. Each RuvB hexamer is contacted by two RuvA subunits (via domain III) on 2 adjacent RuvB subunits; this complex drives branch migration. In the full resolvosome a probable DNA-RuvA(4)-RuvB(12)-RuvC(2) complex forms which resolves the HJ.

It is found in the cytoplasm. It catalyses the reaction ATP + H2O = ADP + phosphate + H(+). The RuvA-RuvB-RuvC complex processes Holliday junction (HJ) DNA during genetic recombination and DNA repair, while the RuvA-RuvB complex plays an important role in the rescue of blocked DNA replication forks via replication fork reversal (RFR). RuvA specifically binds to HJ cruciform DNA, conferring on it an open structure. The RuvB hexamer acts as an ATP-dependent pump, pulling dsDNA into and through the RuvAB complex. RuvB forms 2 homohexamers on either side of HJ DNA bound by 1 or 2 RuvA tetramers; 4 subunits per hexamer contact DNA at a time. Coordinated motions by a converter formed by DNA-disengaged RuvB subunits stimulates ATP hydrolysis and nucleotide exchange. Immobilization of the converter enables RuvB to convert the ATP-contained energy into a lever motion, pulling 2 nucleotides of DNA out of the RuvA tetramer per ATP hydrolyzed, thus driving DNA branch migration. The RuvB motors rotate together with the DNA substrate, which together with the progressing nucleotide cycle form the mechanistic basis for DNA recombination by continuous HJ branch migration. Branch migration allows RuvC to scan DNA until it finds its consensus sequence, where it cleaves and resolves cruciform DNA. This Campylobacter concisus (strain 13826) protein is Holliday junction branch migration complex subunit RuvB.